The following is a 132-amino-acid chain: Ig kappa chain V-III region MOPC 321 (132 aa).

A signal peptide spans 1–20 (METDTLLLWVLLLWVPGSTG). A framework-1 region spans residues 21 to 43 (DIVLTQSPASLAVSLGQRATISC). A disulfide bridge links Cys43 with Cys112. The interval 44–58 (RASKSVNTYGNSFMZ) is complementarity-determining-1. The interval 59 to 73 (WYZZKPGZPPKLLIY) is framework-2. Residues 74–80 (RASNLZS) are complementarity-determining-2. Residues 81 to 112 (GIPARFSGSGSRTBFTLTIBPVZABDVATYFC) are framework-3. The complementarity-determining-3 stretch occupies residues 113–121 (ZZSBZBPWT). Residues 122 to 131 (FGSGTKLEIK) are framework-4.

The chain is Ig kappa chain V-III region MOPC 321 from Mus musculus (Mouse).